Reading from the N-terminus, the 2832-residue chain is Cyclic beta-(1,2)-glucan synthase NdvB (2832 aa).

The next 7 helical transmembrane spans lie at 411–431, 444–464, 810–830, 831–851, 880–900, 938–958, and 959–979; these read FAIA…VYAF, IMLL…FNTV, LIPV…EPTP, ALIW…LSLI, QVAL…DAIV, WTAP…DTGL, and PFIG…AWFV. The 208-residue stretch at 1299–1506 folds into the Glycoamylase-like domain; that stretch reads LASEARLTSL…NGQLREWFHA (208 aa).

Belongs to the NdvB family.

The protein localises to the cell inner membrane. The catalysed reaction is [(1-&gt;2)-beta-D-glucosyl](n) + UDP-alpha-D-glucose = [(1-&gt;2)-beta-D-glucosyl](n+1) + UDP + H(+). Its function is as follows. Involved in the biosynthesis of cyclic beta-(1,2)-glucan. It seems that NdvB is involved in three enzymatic activities. First, it may catalyze the transfer of the first glucose from UDP-Glc to an unknown amino acid. In the second enzymatic activity (UDP-Glc:beta-(1,2) oligosaccharide glucosyltransferase), it may be responsible for chain elongation. Finally, in the third activity, it may catalyze glucan cyclization and release from the protein. NdvB is also involved in nodule invasion and in bacteroid development. The chain is Cyclic beta-(1,2)-glucan synthase NdvB from Rhizobium meliloti (strain 1021) (Ensifer meliloti).